We begin with the raw amino-acid sequence, 604 residues long: Putative O-acetyltransferase SAR0937 (604 aa).

Transmembrane regions (helical) follow at residues 15–35 (YMPG…IYHL), 43–63 (GFLG…SLLL), 85–105 (LLPA…LLKS), 150–170 (AIEE…LLTI), 176–196 (IGFI…FIYS), 212–232 (LQTL…KLKN), 240–260 (YVID…FFII), 267–287 (IYDG…ASVV), 310–330 (YSLY…YVDG), 332–352 (IPVY…ELSY), and 377–397 (FIRM…LVGA). Active-site residues include Ser459, Asp581, and His584.

The protein belongs to the acyltransferase 3 family.

The protein localises to the cell membrane. This chain is Putative O-acetyltransferase SAR0937, found in Staphylococcus aureus (strain MRSA252).